We begin with the raw amino-acid sequence, 259 residues long: Deoxyribose-phosphate aldolase (259 aa).

Aspartate 102 acts as the Proton donor/acceptor in catalysis. Lysine 167 functions as the Schiff-base intermediate with acetaldehyde in the catalytic mechanism. Lysine 201 serves as the catalytic Proton donor/acceptor.

It belongs to the DeoC/FbaB aldolase family. DeoC type 2 subfamily.

It localises to the cytoplasm. It carries out the reaction 2-deoxy-D-ribose 5-phosphate = D-glyceraldehyde 3-phosphate + acetaldehyde. It participates in carbohydrate degradation; 2-deoxy-D-ribose 1-phosphate degradation; D-glyceraldehyde 3-phosphate and acetaldehyde from 2-deoxy-alpha-D-ribose 1-phosphate: step 2/2. In terms of biological role, catalyzes a reversible aldol reaction between acetaldehyde and D-glyceraldehyde 3-phosphate to generate 2-deoxy-D-ribose 5-phosphate. This Photorhabdus laumondii subsp. laumondii (strain DSM 15139 / CIP 105565 / TT01) (Photorhabdus luminescens subsp. laumondii) protein is Deoxyribose-phosphate aldolase.